The primary structure comprises 512 residues: Alpha-1B-glycoprotein (512 aa).

The first 18 residues, methionine 1–glycine 18, serve as a signal peptide directing secretion. Ig-like V-type domains lie at methionine 22 to lysine 126, glutamate 127 to serine 219, glutamine 220 to leucine 312, methionine 313 to asparagine 415, and glycine 416 to glycine 512. Residues asparagine 44, asparagine 89, and asparagine 192 are each glycosylated (N-linked (GlcNAc...) asparagine). 5 disulfide bridges follow: cysteine 49–cysteine 96, cysteine 153–cysteine 195, cysteine 245–cysteine 292, cysteine 343–cysteine 392, and cysteine 441–cysteine 488. N-linked (GlcNAc...) asparagine glycans are attached at residues asparagine 369, asparagine 381, asparagine 389, and asparagine 485.

In terms of assembly, interacts with CRISP3. As to expression, expressed in the liver hepatocytes of male and female GH transgenic mice and in the liver of female, but not of male, non-transgenic mice.

It localises to the secreted. The polypeptide is Alpha-1B-glycoprotein (A1bg) (Mus musculus (Mouse)).